The chain runs to 238 residues: Ribosomal RNA small subunit methyltransferase E 1 (238 aa).

It belongs to the RNA methyltransferase RsmE family.

Its subcellular location is the cytoplasm. The enzyme catalyses uridine(1498) in 16S rRNA + S-adenosyl-L-methionine = N(3)-methyluridine(1498) in 16S rRNA + S-adenosyl-L-homocysteine + H(+). Specifically methylates the N3 position of the uracil ring of uridine 1498 (m3U1498) in 16S rRNA. Acts on the fully assembled 30S ribosomal subunit. The chain is Ribosomal RNA small subunit methyltransferase E 1 (rsmE1) from Borreliella burgdorferi (strain ATCC 35210 / DSM 4680 / CIP 102532 / B31) (Borrelia burgdorferi).